The chain runs to 436 residues: Serine/threonine-protein kinase STK11 (436 aa).

A Phosphoserine modification is found at Ser-31. Lys-44 and Lys-48 each carry N6-acetyllysine. The interval 45 to 90 (LIGKYLMGDLLGEGSYGKVKEVLDSETLCRRAVKILKKKKLRRIPN) is sufficient for interaction with SIRT1. Positions 49 to 309 (YLMGDLLGEG…IRQIRQHSWF (261 aa)) constitute a Protein kinase domain. ATP-binding positions include 55 to 63 (LGEGSYGKV) and Lys-78. N6-acetyllysine is present on residues Lys-96 and Lys-97. The active-site Proton acceptor is Asp-176. Thr-189 is subject to Phosphothreonine; by autocatalysis. 2 positions are modified to N6-acetyllysine: Lys-296 and Lys-311. Ser-325 carries the phosphoserine modification. Position 336 is a phosphothreonine; by autocatalysis (Thr-336). The residue at position 366 (Thr-366) is a Phosphothreonine; by ATM and autocatalysis. The segment at 398 to 421 (TEPQLSSKVKPEGRPGTANPARKV) is disordered. Ser-403 carries the phosphoserine modification. The residue at position 420 (Lys-420) is an N6-acetyllysine. A lipid anchor (S-palmitoyl cysteine) is attached at Cys-422. Lys-426 bears the N6-acetyllysine mark. The residue at position 431 (Ser-431) is a Phosphoserine; by autocatalysis, PKA, PKC/PRKCZ and RPS6KA1. Residue Cys-433 is modified to Cysteine methyl ester. Residue Cys-433 is the site of S-farnesyl cysteine attachment. Lys-434 carries the post-translational modification N6-acetyllysine. A propeptide spans 434–436 (KQQ) (removed in mature form).

Belongs to the protein kinase superfamily. CAMK Ser/Thr protein kinase family. LKB1 subfamily. As to quaternary structure, catalytic component of a trimeric complex composed of STK11/LKB1, STRAD (STRADA or STRADB) and CAB39/MO25 (CAB39/MO25alpha or CAB39L/MO25beta): the complex tethers STK11/LKB1 in the cytoplasm and stimulates its catalytic activity. Found in a ternary complex composed of SMAD4, STK11/LKB1 and STK11IP. Interacts with p53/TP53, SMAD4, STK11IP and WDR6. Interacts with NR4A1. Interacts with NISCH; this interaction may increase STK11 activity. Interacts with PTEN, leading to PTEN phosphorylation. Interacts with SIRT1; the interaction deacetylates STK11. Interacts with CDKN1A. The cofactor is Mg(2+). It depends on Mn(2+) as a cofactor. In terms of processing, phosphorylated by ATM at Thr-366 following ionizing radiation (IR). Phosphorylation at Ser-431 by RPS6KA1 and/or some PKA is required to inhibit cell growth. Phosphorylation at Ser-431 is also required during neuronal polarization to mediate phosphorylation of BRSK1 and BRSK2. Phosphorylation by PKC/PRKCZ at Ser-399 in isoform 2 promotes metformin (or peroxynitrite)-induced nuclear export of STK11 and activation of AMPK. UV radiation-induced phosphorylation at Thr-366 mediates CDKN1A degradation. Post-translationally, acetylated. Deacetylation at Lys-48 enhances cytoplasmic localization and kinase activity in vitro. In terms of tissue distribution, widely expressed. Predominantly expressed in testis (at protein level). As to expression, expressed in adult brain and liver and absent from tissues derived from postnatal day 7.

It is found in the nucleus. The protein localises to the cytoplasm. The protein resides in the membrane. Its subcellular location is the mitochondrion. The catalysed reaction is L-seryl-[protein] + ATP = O-phospho-L-seryl-[protein] + ADP + H(+). It catalyses the reaction L-threonyl-[protein] + ATP = O-phospho-L-threonyl-[protein] + ADP + H(+). With respect to regulation, activated by forming a complex with STRAD (STRADA or STRADB) and CAB39/MO25 (CAB39/MO25alpha or CAB39L/MO25beta): STRADA (or STRADB)-binding promotes a conformational change of STK11/LKB1 in an active conformation, which is stabilized by CAB39/MO25alpha (or CAB39L/MO25beta) interacting with the STK11/LKB1 activation loop. Sequestration in the nucleus by NR4A1 prevents it from phosphorylating and activating cytoplasmic AMPK. Tumor suppressor serine/threonine-protein kinase that controls the activity of AMP-activated protein kinase (AMPK) family members, thereby playing a role in various processes such as cell metabolism, cell polarity, apoptosis and DNA damage response. Acts by phosphorylating the T-loop of AMPK family proteins, thus promoting their activity: phosphorylates PRKAA1, PRKAA2, BRSK1, BRSK2, MARK1, MARK2, MARK3, MARK4, NUAK1, NUAK2, SIK1, SIK2, SIK3 and SNRK but not MELK. Also phosphorylates non-AMPK family proteins such as STRADA, PTEN and possibly p53/TP53. Acts as a key upstream regulator of AMPK by mediating phosphorylation and activation of AMPK catalytic subunits PRKAA1 and PRKAA2 and thereby regulates processes including: inhibition of signaling pathways that promote cell growth and proliferation when energy levels are low, glucose homeostasis in liver, activation of autophagy when cells undergo nutrient deprivation, and B-cell differentiation in the germinal center in response to DNA damage. Also acts as a regulator of cellular polarity by remodeling the actin cytoskeleton. Required for cortical neuron polarization by mediating phosphorylation and activation of BRSK1 and BRSK2, leading to axon initiation and specification. Involved in DNA damage response: interacts with p53/TP53 and recruited to the CDKN1A/WAF1 promoter to participate in transcription activation. Able to phosphorylate p53/TP53; the relevance of such result in vivo is however unclear and phosphorylation may be indirect and mediated by downstream STK11/LKB1 kinase NUAK1. Also acts as a mediator of p53/TP53-dependent apoptosis via interaction with p53/TP53: translocates to the mitochondrion during apoptosis and regulates p53/TP53-dependent apoptosis pathways. Regulates UV radiation-induced DNA damage response mediated by CDKN1A. In association with NUAK1, phosphorylates CDKN1A in response to UV radiation and contributes to its degradation which is necessary for optimal DNA repair. Its function is as follows. Has a role in spermiogenesis. In Mus musculus (Mouse), this protein is Serine/threonine-protein kinase STK11.